The following is a 605-amino-acid chain: Replication protein E1 (605 aa).

Positions 84-86 match the Nuclear localization signal motif; that stretch reads KRK. Phosphoserine; by host occurs at positions 90 and 94. The span at 90–101 shows a compositional bias: low complexity; that stretch reads SSQNSSGSEASE. The segment at 90–112 is disordered; that stretch reads SSQNSSGSEASETPVKRRKSGAK. A Phosphothreonine; by host CDK1 modification is found at T102. The Nuclear localization signal motif lies at 105–108; that stretch reads KRRK. A Phosphoserine; by host modification is found at S109. Residues 142-308 form a DNA-binding region region; that stretch reads EEQAISHLHL…QTTLNESLQT (167 aa). The 151-residue stretch at 407–557 folds into the SF3 helicase domain; it reads IELITFINAL…CTDESGEQPF (151 aa). 433–440 contacts ATP; that stretch reads GPPNTGKS. A Glycyl lysine isopeptide (Lys-Gly) (interchain with G-Cter in SUMO) cross-link involves residue K514. Positions 582-605 are disordered; that stretch reads EDSEEDGDSMRTFTCSARNTNAVD. Positions 592–605 are enriched in polar residues; that stretch reads RTFTCSARNTNAVD.

Belongs to the papillomaviridae E1 protein family. In terms of assembly, can form hexamers. Interacts with E2 protein; this interaction increases E1 DNA binding specificity. Interacts with host DNA polymerase subunit POLA2. Interacts with host single stranded DNA-binding protein RPA1. Interacts with host TOP1; this interaction stimulates the enzymatic activity of TOP1. Phosphorylated. Probably phosphorylated by host PKA and PKC at Ser-109. Phosphorylated by host CDK1 at Thr-102. Post-translationally, phosphorylated. In terms of processing, sumoylated.

Its subcellular location is the host nucleus. The catalysed reaction is Couples ATP hydrolysis with the unwinding of duplex DNA by translocating in the 3'-5' direction.. It carries out the reaction ATP + H2O = ADP + phosphate + H(+). Functionally, ATP-dependent DNA 3'-5' helicase required for initiation of viral DNA replication. It forms a complex with the viral E2 protein. The E1-E2 complex binds to the replication origin which contains binding sites for both proteins. During the initial step, a dimer of E1 interacts with a dimer of protein E2 leading to a complex that binds the viral origin of replication with high specificity. Then, a second dimer of E1 displaces the E2 dimer in an ATP-dependent manner to form the E1 tetramer. Following this, two E1 monomers are added to each half of the site, which results in the formation of two E1 trimers on the viral ori. Subsequently, two hexamers will be created. The double hexamer acts as a bi-directional helicase machinery and unwinds the viral DNA and then recruits the host DNA polymerase to start replication. The polypeptide is Replication protein E1 (Bovine papillomavirus type 1).